The sequence spans 283 residues: MNGFFLVNKPEKMTSHDVVFQIKKKFHFDKVGHTGTLDPLASGLLIICVGKATKLAFLFDKLPKTYQGTFLFNKHYDTLDVTGKLLDTKNTPLTDCNIQKSFASFHQKKYLQIPPMFSAVKIKGKKMYRLARKNQVVDIPPREVFIHHFEKTSLFCRDQVDFLAHVSKGTYIRSLARDLALQLNTYGALLRLQRTAIGTHLLQNAKTIENLELNDLILDSTFFAAYDELILNDYLIKLVKNGTHLDQRQITTKKPFIVKDSNKNFVAYYDTLDENKYYPRYFF.

Aspartate 38 functions as the Nucleophile in the catalytic mechanism.

Belongs to the pseudouridine synthase TruB family. Type 1 subfamily.

The enzyme catalyses uridine(55) in tRNA = pseudouridine(55) in tRNA. In terms of biological role, responsible for synthesis of pseudouridine from uracil-55 in the psi GC loop of transfer RNAs. The protein is tRNA pseudouridine synthase B of Onion yellows phytoplasma (strain OY-M).